We begin with the raw amino-acid sequence, 1198 residues long: Regulator of G-protein signaling 3 (1198 aa).

A C2 domain is found at 137–256 (GAGQLRLSID…TPDKEISGWY (120 aa)). The 78-residue stretch at 299–376 (KITIPRGKDG…EIILLVWRMV (78 aa)) folds into the PDZ domain. Omega-N-methylarginine is present on R448. Residues 669–933 (QQLAASPPDS…GAEGGLSLRV (265 aa)) form a disordered region. A Phosphoserine modification is found at S674. Positions 679–697 (KMFETEADEKREMALEEGK) are enriched in basic and acidic residues. Positions 739–751 (EPLSSKDSATSEG) are enriched in polar residues. Over residues 753-773 (PPGPDAPPSKDVPPCQEPPPA) the composition is skewed to pro residues. The segment covering 877-906 (GDEEDAEEAEEVEEGEEGEEDEDEDTSDDN) has biased composition (acidic residues). The span at 907–917 (YGERSEAKRSS) shows a compositional bias: basic and acidic residues. 4 positions are modified to phosphoserine: S943, S946, S978, and S1007. 2 disordered regions span residues 1007–1026 (SGAD…KSKN) and 1032–1056 (KNKL…ADKM). The RGS domain maps to 1073–1198 (SLEKLLVHKY…INQKKMSPPL (126 aa)).

As to quaternary structure, binds EFNB1 and EFNB2. Binds the GNB1-GNG2 heterodimer. Post-translationally, phosphorylated by cyclic GMP-dependent protein kinase. In terms of processing, ISGylated.

It localises to the cytoplasm. The protein resides in the nucleus. The protein localises to the cell membrane. Its function is as follows. Down-regulates signaling from heterotrimeric G-proteins by increasing the GTPase activity of the alpha subunits, thereby driving them into their inactive GDP-bound form. Down-regulates G-protein-mediated release of inositol phosphates and activation of MAP kinases. The protein is Regulator of G-protein signaling 3 (RGS3) of Homo sapiens (Human).